We begin with the raw amino-acid sequence, 351 residues long: Protein MGF 360-12L (351 aa).

Residues 57–89 (DLNMALVKAVKENNYSLIKLFTEWGANINYGLI) form an ANK repeat.

This sequence belongs to the asfivirus MGF 360 family.

Plays a role in virus cell tropism, and may be required for efficient virus replication in macrophages. This Ornithodoros (relapsing fever ticks) protein is Protein MGF 360-12L.